Reading from the N-terminus, the 594-residue chain is Bifunctional lycopene cyclase/phytoene synthase (594 aa).

Positions methionine 1 to asparagine 249 are lycopene beta-cyclase. A run of 7 helical transmembrane segments spans residues leucine 3–leucine 23, lysine 35–isoleucine 55, leucine 77–phenylalanine 97, leucine 130–glycine 150, methionine 153–methionine 173, phenylalanine 176–leucine 196, and isoleucine 227–methionine 247. Positions tyrosine 256–leucine 594 are phytoene synthase.

The protein in the N-terminal section; belongs to the lycopene beta-cyclase family. In the C-terminal section; belongs to the phytoene/squalene synthase family.

It is found in the membrane. It carries out the reaction all-trans-lycopene = gamma-carotene. The enzyme catalyses gamma-carotene = all-trans-beta-carotene. It catalyses the reaction 2 (2E,6E,10E)-geranylgeranyl diphosphate = 15-cis-phytoene + 2 diphosphate. It functions in the pathway carotenoid biosynthesis; beta-carotene biosynthesis. Its pathway is carotenoid biosynthesis; phytoene biosynthesis; all-trans-phytoene from geranylgeranyl diphosphate: step 1/1. Bifunctional enzyme that catalyzes the reactions from geranylgeranyl diphosphate to phytoene (phytoene synthase) and lycopene to beta-carotene via the intermediate gamma-carotene (lycopene cyclase). In Arthroderma gypseum (strain ATCC MYA-4604 / CBS 118893) (Microsporum gypseum), this protein is Bifunctional lycopene cyclase/phytoene synthase.